Here is a 508-residue protein sequence, read N- to C-terminus: Photosystem II CP47 reaction center protein (508 aa).

6 helical membrane passes run 21 to 36 (SVHI…WAGS), 101 to 115 (IVFS…IWHW), 140 to 156 (GIHL…FGAF), 203 to 218 (IAAG…FHLS), 237 to 252 (VLSS…AFVV), and 457 to 472 (SFAL…HGAR).

The protein belongs to the PsbB/PsbC family. PsbB subfamily. As to quaternary structure, PSII is composed of 1 copy each of membrane proteins PsbA, PsbB, PsbC, PsbD, PsbE, PsbF, PsbH, PsbI, PsbJ, PsbK, PsbL, PsbM, PsbT, PsbX, PsbY, PsbZ, Psb30/Ycf12, at least 3 peripheral proteins of the oxygen-evolving complex and a large number of cofactors. It forms dimeric complexes. It depends on Binds multiple chlorophylls. PSII binds additional chlorophylls, carotenoids and specific lipids. as a cofactor.

It is found in the plastid. It localises to the chloroplast thylakoid membrane. Functionally, one of the components of the core complex of photosystem II (PSII). It binds chlorophyll and helps catalyze the primary light-induced photochemical processes of PSII. PSII is a light-driven water:plastoquinone oxidoreductase, using light energy to abstract electrons from H(2)O, generating O(2) and a proton gradient subsequently used for ATP formation. The polypeptide is Photosystem II CP47 reaction center protein (Gossypium hirsutum (Upland cotton)).